The following is a 187-amino-acid chain: dCTP deaminase (187 aa).

DCTP contacts are provided by residues 110–115, 134–136, glutamine 155, tyrosine 169, and glutamine 179; these read KSTYAR and TLE. Glutamate 136 functions as the Proton donor/acceptor in the catalytic mechanism.

It belongs to the dCTP deaminase family. Homotrimer.

The enzyme catalyses dCTP + H2O + H(+) = dUTP + NH4(+). It functions in the pathway pyrimidine metabolism; dUMP biosynthesis; dUMP from dCTP (dUTP route): step 1/2. In terms of biological role, catalyzes the deamination of dCTP to dUTP. This is dCTP deaminase from Bordetella petrii (strain ATCC BAA-461 / DSM 12804 / CCUG 43448).